The primary structure comprises 88 residues: ATP synthase F(0) complex subunit f, mitochondrial (88 aa).

Position 2 is an N-acetylalanine (A2). The residue at position 3 (S3) is a Phosphoserine. Position 16 is an N6-acetyllysine (K16). Residues 62–79 traverse the membrane as a helical segment; it reads MVLAAYVVFSYCISYKEL.

This sequence belongs to the ATPase F chain family. Component of the ATP synthase complex composed at least of ATP5F1A/subunit alpha, ATP5F1B/subunit beta, ATP5MC1/subunit c (homooctomer), MT-ATP6/subunit a, MT-ATP8/subunit 8, ATP5ME/subunit e, ATP5MF/subunit f, ATP5MG/subunit g, ATP5MK/subunit k, ATP5MJ/subunit j, ATP5F1C/subunit gamma, ATP5F1D/subunit delta, ATP5F1E/subunit epsilon, ATP5PF/subunit F6, ATP5PB/subunit b, ATP5PD/subunit d, ATP5PO/subunit OSCP. ATP synthase complex consists of a soluble F(1) head domain (subunits alpha(3) and beta(3)) - the catalytic core - and a membrane F(0) domain - the membrane proton channel (subunits c, a, 8, e, f, g, k and j). These two domains are linked by a central stalk (subunits gamma, delta, and epsilon) rotating inside the F1 region and a stationary peripheral stalk (subunits F6, b, d, and OSCP).

It is found in the mitochondrion. The protein resides in the mitochondrion inner membrane. Functionally, subunit f, of the mitochondrial membrane ATP synthase complex (F(1)F(0) ATP synthase or Complex V) that produces ATP from ADP in the presence of a proton gradient across the membrane which is generated by electron transport complexes of the respiratory chain. ATP synthase complex consist of a soluble F(1) head domain - the catalytic core - and a membrane F(1) domain - the membrane proton channel. These two domains are linked by a central stalk rotating inside the F(1) region and a stationary peripheral stalk. During catalysis, ATP synthesis in the catalytic domain of F(1) is coupled via a rotary mechanism of the central stalk subunits to proton translocation. In vivo, can only synthesize ATP although its ATP hydrolase activity can be activated artificially in vitro. Part of the complex F(0) domain. In Rattus norvegicus (Rat), this protein is ATP synthase F(0) complex subunit f, mitochondrial.